We begin with the raw amino-acid sequence, 114 residues long: Fumarate reductase subunit D (114 aa).

3 consecutive transmembrane segments (helical) span residues 24–44 (VSAI…PFGL), 50–70 (LITF…TIFP), and 92–112 (GGFI…FAVI).

This sequence belongs to the FrdD family. As to quaternary structure, part of an enzyme complex containing four subunits: a flavoprotein (FrdA), an iron-sulfur protein (FrdB), and two hydrophobic anchor proteins (FrdC and FrdD).

It localises to the cell inner membrane. In terms of biological role, anchors the catalytic components of the fumarate reductase complex to the cell membrane, binds quinones. The chain is Fumarate reductase subunit D from Haemophilus influenzae (strain 86-028NP).